Consider the following 215-residue polypeptide: Imidazole glycerol phosphate synthase subunit HisH (215 aa).

The Glutamine amidotransferase type-1 domain occupies 8-215 (KVVVFDYGFG…QLLNNWIGTL (208 aa)). Cysteine 86 serves as the catalytic Nucleophile. Catalysis depends on residues histidine 196 and glutamate 198.

Heterodimer of HisH and HisF.

Its subcellular location is the cytoplasm. It carries out the reaction 5-[(5-phospho-1-deoxy-D-ribulos-1-ylimino)methylamino]-1-(5-phospho-beta-D-ribosyl)imidazole-4-carboxamide + L-glutamine = D-erythro-1-(imidazol-4-yl)glycerol 3-phosphate + 5-amino-1-(5-phospho-beta-D-ribosyl)imidazole-4-carboxamide + L-glutamate + H(+). The catalysed reaction is L-glutamine + H2O = L-glutamate + NH4(+). The protein operates within amino-acid biosynthesis; L-histidine biosynthesis; L-histidine from 5-phospho-alpha-D-ribose 1-diphosphate: step 5/9. Functionally, IGPS catalyzes the conversion of PRFAR and glutamine to IGP, AICAR and glutamate. The HisH subunit catalyzes the hydrolysis of glutamine to glutamate and ammonia as part of the synthesis of IGP and AICAR. The resulting ammonia molecule is channeled to the active site of HisF. This chain is Imidazole glycerol phosphate synthase subunit HisH, found in Streptomyces avermitilis (strain ATCC 31267 / DSM 46492 / JCM 5070 / NBRC 14893 / NCIMB 12804 / NRRL 8165 / MA-4680).